Here is a 154-residue protein sequence, read N- to C-terminus: Endoribonuclease YbeY (154 aa).

The Zn(2+) site is built by H113, H117, and H123.

This sequence belongs to the endoribonuclease YbeY family. Zn(2+) serves as cofactor.

The protein resides in the cytoplasm. In terms of biological role, single strand-specific metallo-endoribonuclease involved in late-stage 70S ribosome quality control and in maturation of the 3' terminus of the 16S rRNA. This Vibrio cholerae serotype O1 (strain ATCC 39315 / El Tor Inaba N16961) protein is Endoribonuclease YbeY.